The following is a 254-amino-acid chain: NAD kinase (254 aa).

Asp-44 serves as the catalytic Proton acceptor. Residues 44 to 45 (DG), 114 to 115 (NE), Asp-144, Ala-152, 155 to 160 (TAYNYS), and Ala-179 contribute to the NAD(+) site.

It belongs to the NAD kinase family. A divalent metal cation is required as a cofactor.

The protein localises to the cytoplasm. The catalysed reaction is NAD(+) + ATP = ADP + NADP(+) + H(+). Its function is as follows. Involved in the regulation of the intracellular balance of NAD and NADP, and is a key enzyme in the biosynthesis of NADP. Catalyzes specifically the phosphorylation on 2'-hydroxyl of the adenosine moiety of NAD to yield NADP. In Cereibacter sphaeroides (strain ATCC 17029 / ATH 2.4.9) (Rhodobacter sphaeroides), this protein is NAD kinase.